A 120-amino-acid chain; its full sequence is U13-lycotoxin-Ls1a (120 aa).

Positions 1 to 16 are cleaved as a signal peptide; the sequence is MKTLFVLISILYAVYC. The propeptide occupies 17-54; it reads FSSEEDVDSAYLANELEPVEDINSEQYAALEPKEEQER. Disulfide bonds link cysteine 56/cysteine 70, cysteine 63/cysteine 76, cysteine 69/cysteine 87, and cysteine 78/cysteine 85. Positions 56–95 constitute an Agouti domain; sequence CADMGQDCKDDCDCCLNIATCNCWFGRYFCSCTFGDYQTC.

The protein belongs to the neurotoxin 05 (agouti) family. In terms of processing, contains 6 disulfide bonds. Expressed by the venom gland.

It localises to the secreted. The protein is U13-lycotoxin-Ls1a of Lycosa singoriensis (Wolf spider).